We begin with the raw amino-acid sequence, 204 residues long: Large ribosomal subunit protein bL25 (204 aa).

Belongs to the bacterial ribosomal protein bL25 family. CTC subfamily. Part of the 50S ribosomal subunit; part of the 5S rRNA/L5/L18/L25 subcomplex. Contacts the 5S rRNA. Binds to the 5S rRNA independently of L5 and L18.

This is one of the proteins that binds to the 5S RNA in the ribosome where it forms part of the central protuberance. The chain is Large ribosomal subunit protein bL25 from Wolbachia sp. subsp. Brugia malayi (strain TRS).